The sequence spans 564 residues: NAD-dependent malic enzyme (564 aa).

Catalysis depends on Tyr-102, which acts as the Proton donor. Arg-155 contacts NAD(+). Lys-173 serves as the catalytic Proton acceptor. Positions 244, 245, and 268 each coordinate a divalent metal cation. Residues Asp-268 and Asn-417 each contribute to the NAD(+) site.

It belongs to the malic enzymes family. In terms of assembly, homotetramer. Mg(2+) is required as a cofactor. Requires Mn(2+) as cofactor.

The catalysed reaction is (S)-malate + NAD(+) = pyruvate + CO2 + NADH. It catalyses the reaction oxaloacetate + H(+) = pyruvate + CO2. The sequence is that of NAD-dependent malic enzyme from Pseudomonas aeruginosa (strain LESB58).